The following is a 308-amino-acid chain: Probable manganese-dependent inorganic pyrophosphatase (308 aa).

Mn(2+) is bound by residues His9, Asp13, Asp15, Asp74, His96, and Asp148.

The protein belongs to the PPase class C family. Mn(2+) serves as cofactor.

Its subcellular location is the cytoplasm. It catalyses the reaction diphosphate + H2O = 2 phosphate + H(+). The polypeptide is Probable manganese-dependent inorganic pyrophosphatase (Oceanobacillus iheyensis (strain DSM 14371 / CIP 107618 / JCM 11309 / KCTC 3954 / HTE831)).